Reading from the N-terminus, the 322-residue chain is Ferredoxin--NADP reductase (322 aa).

Residues S14, D33, Q41, Y46, A86, F120, D278, and S319 each contribute to the FAD site.

This sequence belongs to the ferredoxin--NADP reductase type 2 family. Homodimer. FAD is required as a cofactor.

It catalyses the reaction 2 reduced [2Fe-2S]-[ferredoxin] + NADP(+) + H(+) = 2 oxidized [2Fe-2S]-[ferredoxin] + NADPH. This chain is Ferredoxin--NADP reductase, found in Salinispora arenicola (strain CNS-205).